A 185-amino-acid polypeptide reads, in one-letter code: Lipid A acyltransferase PagP (185 aa).

The first 14 residues, methionine 1–glycine 14, serve as a signal peptide directing secretion. A lipid anchor (N-palmitoyl cysteine) is attached at cysteine 15. A lipid anchor (S-diacylglycerol cysteine) is attached at cysteine 15. Catalysis depends on residues histidine 57, aspartate 100, and serine 101.

It belongs to the lipid A palmitoyltransferase family. As to quaternary structure, homodimer.

Its subcellular location is the cell outer membrane. The enzyme catalyses a lipid A + a 1,2-diacyl-sn-glycero-3-phosphocholine = a hepta-acyl lipid A + a 2-acyl-sn-glycero-3-phosphocholine. It catalyses the reaction a lipid IVA + a 1,2-diacyl-sn-glycero-3-phosphocholine = a lipid IVB + a 2-acyl-sn-glycero-3-phosphocholine. The catalysed reaction is a lipid IIA + a 1,2-diacyl-sn-glycero-3-phosphocholine = a lipid IIB + a 2-acyl-sn-glycero-3-phosphocholine. In terms of biological role, transfers a fatty acid residue from the sn-1 position of a phospholipid to the N-linked hydroxyfatty acid chain on the proximal unit of lipid A or its precursors. The sequence is that of Lipid A acyltransferase PagP from Erwinia pyrifoliae (strain DSM 12163 / CIP 106111 / Ep16/96).